We begin with the raw amino-acid sequence, 21 residues long: Protein YadW (21 aa).

This is Protein YadW from Escherichia coli (strain K12).